Reading from the N-terminus, the 467-residue chain is A-type ATP synthase subunit B (467 aa).

A disordered region spans residues 95 to 114 (GKGQPRDHMPLPPPEDFRDV).

The protein belongs to the ATPase alpha/beta chains family. Has multiple subunits with at least A(3), B(3), C, D, E, F, H, I and proteolipid K(x).

The protein resides in the cell membrane. In terms of biological role, component of the A-type ATP synthase that produces ATP from ADP in the presence of a proton gradient across the membrane. The B chain is a regulatory subunit. The polypeptide is A-type ATP synthase subunit B (Pyrobaculum islandicum (strain DSM 4184 / JCM 9189 / GEO3)).